The following is a 248-amino-acid chain: 2,3-bisphosphoglycerate-dependent phosphoglycerate mutase (248 aa).

Substrate-binding positions include arginine 9–asparagine 16, threonine 22–glycine 23, arginine 61, glutamate 88–tyrosine 91, lysine 99, arginine 115–arginine 116, and glycine 183–asparagine 184. The active-site Tele-phosphohistidine intermediate is the histidine 10. Glutamate 88 functions as the Proton donor/acceptor in the catalytic mechanism.

Belongs to the phosphoglycerate mutase family. BPG-dependent PGAM subfamily.

It carries out the reaction (2R)-2-phosphoglycerate = (2R)-3-phosphoglycerate. The protein operates within carbohydrate degradation; glycolysis; pyruvate from D-glyceraldehyde 3-phosphate: step 3/5. In terms of biological role, catalyzes the interconversion of 2-phosphoglycerate and 3-phosphoglycerate. This chain is 2,3-bisphosphoglycerate-dependent phosphoglycerate mutase, found in Arthrobacter sp. (strain FB24).